The chain runs to 301 residues: GTPase IMAP family member 3 (301 aa).

Residues 1-279 (METLQNVVTG…GKKLEVLHSD (279 aa)) lie on the Cytoplasmic side of the membrane. The 204-residue stretch at 20–223 (SRPLRILLVG…HSNDLFLHAE (204 aa)) folds into the AIG1-type G domain. GTP is bound by residues 29–37 (GKSGCGKSA), Ser-50, 147–149 (RKE), and Asn-184. A required for targeting to the endoplasmic reticulum region spans residues 263-301 (VLKVLPIGKKLEVLHSDFCWYLVLAILIFFVFFFLLFYV). The helical; Anchor for type IV membrane protein transmembrane segment at 280-300 (FCWYLVLAILIFFVFFFLLFY) threads the bilayer. Residue Val-301 is a topological domain, lumenal.

This sequence belongs to the TRAFAC class TrmE-Era-EngA-EngB-Septin-like GTPase superfamily. AIG1/Toc34/Toc159-like paraseptin GTPase family. IAN subfamily. Interacts with BAD, BAK1, BAX, BCL2, BCL2L1/Bcl-xL and BCL2L11/BimEL. The interaction with BAX is increased, when cells initiate apoptosis upon IL2 withdrawal. In terms of tissue distribution, expressed in thymus (in thymocytes), spleen (in splenocytes), lymph node and, at lower levels, in lung. Highly expressed in T lymphocytes.

Its subcellular location is the endoplasmic reticulum membrane. Its function is as follows. During thymocyte development, may support the positive selection of CD4 and CD8 T cells. May play a role in mitochondrial DNA segregation in hematopoietic tissues. Binds GTP. The polypeptide is GTPase IMAP family member 3 (Gimap3) (Mus musculus (Mouse)).